The primary structure comprises 129 residues: Probable tautomerase YrdN (129 aa).

Pro2 (proton acceptor; via imino nitrogen) is an active-site residue.

This sequence belongs to the 4-oxalocrotonate tautomerase family.

Its function is as follows. Putative target of GltR. The polypeptide is Probable tautomerase YrdN (yrdN) (Bacillus subtilis (strain 168)).